The primary structure comprises 519 residues: MTQPLMTMRGIVKTFSGVKALDGIDLTIAPGECVGLCGENGAGKSTLMKVLSGVYPWGTWDGEIIWEGAPLKAASVRDTERAGIIIIHQELMLVPELSVAENIFLGNEITLPGGRMNYAAMYQRADELLRELGISGINAAQPVMNYGGGHQQLIEIAKALNKRAKLLILDEPSSSLTASEISILLDIVRDLKRRGVACVYISHKLDEVAAVCDTISVIRDGRHVATEPMRALTTDRIISLMVGREIKNLFPREPHPIGDVIFEARHVTCFDVTNPRRKRVNDVSFALRRGEILGVAGLVGAGRTELMQAIFGAYPGVSEATVVMEGKPLKIRAPVDAIRAGIGMVPEDRKRHGIVPGLSVGHNITLAVLGRFASAGRIDSAAELDTIHTEMKRLSVRAAHPMLSIASLSGGNQQKAVLTRMLLTNPKVLILDEPTRGVDVGAKYEIYKLIFQLAQRGMSIVMVSSELPEVLGISDRVLVIGEGELRGDFVNDGLTQEDILSAAIRPVQRSPNPTVASAA.

2 ABC transporter domains span residues 6–245 (MTMR…VGRE) and 262–507 (FEAR…IRPV). Residue 38–45 (GENGAGKS) participates in ATP binding.

It belongs to the ABC transporter superfamily. Xylose importer (TC 3.A.1.2.4) family. As to quaternary structure, the complex is composed of two ATP-binding proteins (XylG), two transmembrane proteins (XylH) and a solute-binding protein (XylF).

The protein resides in the cell inner membrane. The enzyme catalyses D-xylose(out) + ATP + H2O = D-xylose(in) + ADP + phosphate + H(+). Its function is as follows. Part of the ABC transporter complex XylFGH involved in xylose import. Responsible for energy coupling to the transport system. The protein is Xylose import ATP-binding protein XylG of Paraburkholderia xenovorans (strain LB400).